Consider the following 577-residue polypeptide: Myb-like protein N (577 aa).

Disordered stretches follow at residues 1–23 (MMTI…NIYT), 206–225 (TPFS…SPLN), and 240–264 (SSSS…LSSS). A compositionally biased stretch (low complexity) spans 213 to 225 (PNSPNSTSSSPLN). 2 consecutive HTH myb-type domains span residues 403-465 (KKST…CPAI) and 466-517 (RKGS…SREV). 2 consecutive DNA-binding regions (H-T-H motif) follow at residues 437–461 (WKKI…KRVL) and 489–513 (WKNV…KSCM). The Myb-like domain occupies 518 to 570 (PWTPKEDEILQKKVIENKQDSTKEIGWMDLSKAMARARQTKIPRTALECKIRF).

It localises to the nucleus. This Dictyostelium discoideum (Social amoeba) protein is Myb-like protein N (mybN).